A 485-amino-acid polypeptide reads, in one-letter code: ATP synthase subunit beta (485 aa).

Over residues 1 to 11 the composition is skewed to basic and acidic residues; sequence MPATETADKNT. The interval 1 to 20 is disordered; it reads MPATETADKNTKSANSDTSG. Residue 170–177 participates in ATP binding; the sequence is GGAGVGKT.

This sequence belongs to the ATPase alpha/beta chains family. In terms of assembly, F-type ATPases have 2 components, CF(1) - the catalytic core - and CF(0) - the membrane proton channel. CF(1) has five subunits: alpha(3), beta(3), gamma(1), delta(1), epsilon(1). CF(0) has three main subunits: a(1), b(2) and c(9-12). The alpha and beta chains form an alternating ring which encloses part of the gamma chain. CF(1) is attached to CF(0) by a central stalk formed by the gamma and epsilon chains, while a peripheral stalk is formed by the delta and b chains.

The protein localises to the cell membrane. It carries out the reaction ATP + H2O + 4 H(+)(in) = ADP + phosphate + 5 H(+)(out). Its function is as follows. Produces ATP from ADP in the presence of a proton gradient across the membrane. The catalytic sites are hosted primarily by the beta subunits. The chain is ATP synthase subunit beta from Mycolicibacterium paratuberculosis (strain ATCC BAA-968 / K-10) (Mycobacterium paratuberculosis).